We begin with the raw amino-acid sequence, 247 residues long: Chaperone protein AfaB (247 aa).

An N-terminal signal peptide occupies residues 1 to 29 (MKMRAVAVFTGMLTGVLSVAGLLSAGAYA).

Belongs to the periplasmic pilus chaperone family.

The protein resides in the periplasm. Involved in the biogenesis of the AFA-III afimbrial adhesin. This Escherichia coli protein is Chaperone protein AfaB (afaB).